Consider the following 340-residue polypeptide: N-acetyl-gamma-glutamyl-phosphate reductase (340 aa).

Cys-146 is a catalytic residue.

The protein belongs to the NAGSA dehydrogenase family. Type 1 subfamily.

Its subcellular location is the cytoplasm. The catalysed reaction is N-acetyl-L-glutamate 5-semialdehyde + phosphate + NADP(+) = N-acetyl-L-glutamyl 5-phosphate + NADPH + H(+). It participates in amino-acid biosynthesis; L-arginine biosynthesis; N(2)-acetyl-L-ornithine from L-glutamate: step 3/4. In terms of biological role, catalyzes the NADPH-dependent reduction of N-acetyl-5-glutamyl phosphate to yield N-acetyl-L-glutamate 5-semialdehyde. In Streptococcus gordonii (strain Challis / ATCC 35105 / BCRC 15272 / CH1 / DL1 / V288), this protein is N-acetyl-gamma-glutamyl-phosphate reductase.